Here is a 249-residue protein sequence, read N- to C-terminus: ATP synthase subunit a 1 (249 aa).

Transmembrane regions (helical) follow at residues 26–46 (FTNV…FLYL), 84–104 (FFPF…LGLF), 114–134 (IIVT…YGFF), 143–163 (LFVP…IEII), 193–213 (FVVS…LPLI), and 216–236 (VAIT…FTVL).

The protein belongs to the ATPase A chain family. F-type ATPases have 2 components, CF(1) - the catalytic core - and CF(0) - the membrane proton channel. CF(1) has five subunits: alpha(3), beta(3), gamma(1), delta(1), epsilon(1). CF(0) has three main subunits: a(1), b(2) and c(9-12). The alpha and beta chains form an alternating ring which encloses part of the gamma chain. CF(1) is attached to CF(0) by a central stalk formed by the gamma and epsilon chains, while a peripheral stalk is formed by the delta and b chains.

It is found in the cell inner membrane. In terms of biological role, key component of the proton channel; it plays a direct role in the translocation of protons across the membrane. This chain is ATP synthase subunit a 1, found in Brucella anthropi (strain ATCC 49188 / DSM 6882 / CCUG 24695 / JCM 21032 / LMG 3331 / NBRC 15819 / NCTC 12168 / Alc 37) (Ochrobactrum anthropi).